Reading from the N-terminus, the 104-residue chain is Nucleoid-associated protein Moth_0028 (104 aa).

Belongs to the YbaB/EbfC family. In terms of assembly, homodimer.

Its subcellular location is the cytoplasm. The protein localises to the nucleoid. In terms of biological role, binds to DNA and alters its conformation. May be involved in regulation of gene expression, nucleoid organization and DNA protection. This chain is Nucleoid-associated protein Moth_0028, found in Moorella thermoacetica (strain ATCC 39073 / JCM 9320).